We begin with the raw amino-acid sequence, 364 residues long: Long-wave-sensitive opsin 1 (364 aa).

The Extracellular segment spans residues 1–52 (MAHAWGPQRLAGGQPQANFEESTQGSIFTYTNSNSTRDPFEGPNYHIAPRWV). O-linked (GlcNAc) serine glycosylation occurs at Ser-22. An N-linked (GlcNAc...) asparagine glycan is attached at Asn-34. The helical transmembrane segment at 53–77 (YHLTSAWMVFVVIASVFTNGLVLAA) threads the bilayer. The Cytoplasmic portion of the chain corresponds to 78–89 (TMRFKKLRHPLN). The chain crosses the membrane as a helical span at residues 90–115 (WILVNLAIADLAETIIASTISVVNQM). The Extracellular segment spans residues 116–129 (YGYFVLGHPLCVVE). Cys-126 and Cys-203 are disulfide-bonded. The helical transmembrane segment at 130–149 (GYTVSLCGITGLWSLAIISW) threads the bilayer. Residues 150–168 (ERWMVVCKPFGNVRFDAKL) lie on the Cytoplasmic side of the membrane. A helical membrane pass occupies residues 169-192 (AITGIAFSWIWAAVWTAPPIFGWS). Topologically, residues 193 to 218 (RYWPHGLKTSCGPDVFSGSSYPGVQS) are extracellular. Residues 219 to 246 (YMIVLMITCCFIPLSVIILCYLQVWLAI) form a helical membrane-spanning segment. Residues 247-268 (RAVAKQQKESESTQKAEKEVTR) lie on the Cytoplasmic side of the membrane. A helical transmembrane segment spans residues 269-292 (MVMVMIFAYCLCWGPYTFFACFAA). The Extracellular segment spans residues 293 to 300 (AHPGYAFH). Residues 301-325 (PLVAALPAYFAKSATIYNPIIYVFM) traverse the membrane as a helical segment. Lys-312 is subject to N6-(retinylidene)lysine. Over 326-364 (NRQFRNCILQLFGKKVDDSSELSSVSKTEASSVSSVSPA) the chain is Cytoplasmic.

Belongs to the G-protein coupled receptor 1 family. Opsin subfamily. In terms of processing, phosphorylated on some or all of the serine and threonine residues present in the C-terminal region. In terms of tissue distribution, expressed in retina (at protein level). Expressed in cone and/or rod photoreceptor cells (at protein level).

It is found in the membrane. Functionally, visual pigments are the light-absorbing molecules that mediate vision. They consist of an apoprotein, opsin, covalently linked to cis-retinal. This Bos taurus (Bovine) protein is Long-wave-sensitive opsin 1 (OPN1LW).